We begin with the raw amino-acid sequence, 105 residues long: Synaptic plasticity regulator PANTS (105 aa).

This sequence belongs to the UPF0545 family. Interacts with RTN4 isoform A/Nogo-A; the interaction results in enhanced RTN4-mediated inhibition of AMPA receptor clustering. Also interacts with NCAM1, RANBP2 and CCT8. Post-translationally, rapidly degraded by proteolysis following neuronal stimulation, resulting in increased AMPA receptor clustering.

It is found in the synapse. The protein resides in the synaptic cleft. Its function is as follows. Negatively regulates long-term potentiation and modulates adult synaptic plasticity. Stabilizes the interaction of RTN4 isoform A/Nogo-A with its receptors, inhibiting clustering of postsynaptic AMPA receptors at synaptic sites. Upon neuronal stimulation, degraded at synapses, reducing RTN4 signaling and allowing AMPA receptor clustering at individual synapses. In Pongo abelii (Sumatran orangutan), this protein is Synaptic plasticity regulator PANTS.